The following is a 404-amino-acid chain: G-protein coupled receptor 182 (404 aa).

Topologically, residues methionine 1–phenylalanine 57 are extracellular. N-linked (GlcNAc...) asparagine glycosylation is found at asparagine 28 and asparagine 37. Residues alanine 58–tryptophan 79 traverse the membrane as a helical segment. At arginine 80–leucine 90 the chain is on the cytoplasmic side. A helical membrane pass occupies residues tyrosine 91–valine 113. At threonine 114–arginine 127 the chain is on the extracellular side. Cysteine 126 and cysteine 202 are oxidised to a cystine. The chain crosses the membrane as a helical span at residues phenylalanine 128–valine 149. At aspartate 150–arginine 170 the chain is on the cytoplasmic side. Residues arginine 171–glutamine 193 traverse the membrane as a helical segment. The Extracellular portion of the chain corresponds to leucine 194–alanine 217. The chain crosses the membrane as a helical span at residues valine 218–valine 239. Over leucine 240–leucine 258 the chain is Cytoplasmic. A helical membrane pass occupies residues leucine 259 to leucine 280. Topologically, residues leucine 281–tyrosine 299 are extracellular. A helical membrane pass occupies residues phenylalanine 300–tyrosine 320. Residues asparagine 321 to serine 404 are Cytoplasmic-facing.

Belongs to the G-protein coupled receptor 1 family. As to expression, highly expressed in heart, skeletal muscle, immune system, adrenal gland and liver.

The protein resides in the cell membrane. Its function is as follows. Orphan receptor. This chain is G-protein coupled receptor 182 (GPR182), found in Homo sapiens (Human).